The following is a 377-amino-acid chain: [2-(trimethylamino)ethyl]phosphonate dioxygenase (377 aa).

Residues 95 to 119 form a disordered region; that stretch reads DTDQSSEVGRTSPDVETWDSSQPAP. Asn-187 is a [2-(trimethylamino)ethyl]phosphonate binding site. His-198 is a 2-oxoglutarate binding site. The Fe(2+) site is built by His-198 and Asp-200. 5 residues coordinate [2-(trimethylamino)ethyl]phosphonate: Asp-200, Asn-201, Tyr-203, Asn-286, and Arg-288. 2-oxoglutarate-binding residues include His-341, Arg-343, and Arg-352. Residue His-341 coordinates Fe(2+).

This sequence belongs to the gamma-BBH/TMLD family. In terms of assembly, homodimer. The cofactor is Fe(2+). It depends on L-ascorbate as a cofactor.

It carries out the reaction [2-(trimethylamino)ethyl]phosphonate + 2-oxoglutarate + O2 = [(1R)-1-hydroxy-2-(trimethylamino)ethyl]phosphonate + succinate + CO2. Its function is as follows. Involved in the degradation of the naturally occurring organophosphonate 2-(trimethylammonio)ethylphosphonate (TMAEP). Catalyzes the hydroxylation of TMAEP to (R)-1-hydroxy-2-(trimethylammonio)ethylphosphonate (OH-TMAEP). Is highly specific for its N-trimethylated substrate. Cannot use gamma-butyrobetaine as substrate. This Leisingera caerulea (Phaeobacter caeruleus) protein is [2-(trimethylamino)ethyl]phosphonate dioxygenase.